The chain runs to 1375 residues: MQENNVQILVLDFGSQYTQLIARRLREYGVYTEIVPYFEKLDSIKSKNPKGIILSGGPASVYEKDAYKPDSAIFTLGIPILGICYGMQLIAQHFGGRVIKADAQEFGKAVLEIMESSQDSKDSSCFAFQGASQGIQAPMTLSFDIFSHHKFPQMLTALLDLWEDSVQASHIFLTKQHIAEIRLEVKAALQSSQNIITATDKKDFLGFIGVEKNKIEMLFVASSVFRKGIGKALLKEALERYLKDYPYILVDCNEQNTQGLAFYKSLGFEKVGMSEKDSAGRDFPIVHLKVSKAILKKALERGTSDSVANAFVCESERVFLRPYTQADFAALHKIVSDKETMYAWGQGFSKKQSQEWLDKQLAHYQQYGFGIWAIIEKQSGAIIGNAGLNHTEISLKGKTQKIVEIGYLLHRDFWGKGYGSEVARMCVKYGFETLGLEEVYCLIKEDNTASIKVAKRLEMQKVGEYPKPYKGKKISHLVFRLEKKVWQESKNNATQGFKSCSLFKGIKQDSIVWMSHADKVESIPQGFRELAKSGNTHYCAIADSKRKIYALQFHPEVVHSECGGQMLQNFAVGICGANTCWNMRHFAQNEIEKLRRIVYGGKAHCENPMSFMQIQEAFKHIGKAQTIQRLVEIWEEGARATHKDLSENEIAGMREEIREAILKSKNLLIAQKNEEWLGFIEIEKNEIAMLFVVPKAFRKGVGKALLKEAFMRYLGAFEVIKVNSLEWALGFYQALGFAKTGKKPIPAGSAGAFSPELIPLSIARESLQKSLGLEAQDSNEGVREKVRCAWATDKDEAARKLYEDYHDTEWGEPLHEDKKLFEHLVLEGFQAGLSWITILKKREAFRVAFDDFDPHIVANYDEDKIKELMRNEGIIRNRAKIEAAIINAKAFMAVQREFGSFDKYIWGFVGGKPIINAFESIADLPASTPLSDKIAKDLKKRGFKFVGTTTMYAMMQSIGMVNDHLTSCFKCNSSLGMQCDKILDFSQGTNTKSANLTKNPKNLHSHTANTRIVDSQHTESSDIKGQSHLESSADSGSAVSLRDFKSCEGATRGSYLEGNDRSGVANSLKITKETTSKVLCAVSGGVDSSVVAALLYRAIGENLIPVFVDTGLLRKGEREAVEKIFKENLKVPLITADASELFLSRLKGVLDPEIKRKIIGETFIEVFEKEAKKHNTKGEIKFLAQGTLYPDVIESVSVKGPSKTIKSHHNVGGLPEWMKFELIEPLRELFKDEVRALGRELGMPESMLMRHPFPGPGLAIRIMGEVNKADLDLLREADSIFIDELHKQSYYDKVWQAFCVLLNVRSVGVMGDNRTYDNTICVRAVEAIDGMTATFAHLPHDFLEGVSNRIINEVEGINRVVYDITSKPPGTIEWE.

One can recognise a Glutamine amidotransferase type-1; first part domain in the interval 7–119 (QILVLDFGSQ…VLEIMESSQD (113 aa)). The active-site Nucleophile is C84. Residues 120–500 (SKDSSCFAFQ…NNATQGFKSC (381 aa)) form an insert-1 region. 2 consecutive N-acetyltransferase domains span residues 141–300 (LSFD…KALE) and 318–484 (VFLR…LEKK). Residues 501 to 580 (SLFKGIKQDS…AVGICGANTC (80 aa)) enclose the Glutamine amidotransferase type-1; second part domain. Residues H554 and E556 contribute to the active site. An insert-2 region spans residues 597–1071 (IVYGGKAHCE…SGVANSLKIT (475 aa)). The N-acetyltransferase 3 domain maps to 612-765 (MQIQEAFKHI…ELIPLSIARE (154 aa)). The segment at 1011–1036 (RIVDSQHTESSDIKGQSHLESSADSG) is disordered. The span at 1014 to 1027 (DSQHTESSDIKGQS) shows a compositional bias: basic and acidic residues. The region spanning 1055 to 1250 (YLEGNDRSGV…LGMPESMLMR (196 aa)) is the GMPS ATP-PPase domain. 1083 to 1089 (SGGVDSS) provides a ligand contact to ATP.

In terms of assembly, homodimer.

It catalyses the reaction XMP + L-glutamine + ATP + H2O = GMP + L-glutamate + AMP + diphosphate + 2 H(+). The protein operates within purine metabolism; GMP biosynthesis; GMP from XMP (L-Gln route): step 1/1. Its function is as follows. Catalyzes the synthesis of GMP from XMP. The protein is Probable GMP synthase [glutamine-hydrolyzing] (guaA) of Helicobacter hepaticus (strain ATCC 51449 / 3B1).